The primary structure comprises 142 residues: Small ribosomal subunit protein uS12 (142 aa).

The protein belongs to the universal ribosomal protein uS12 family. In terms of assembly, part of the 30S ribosomal subunit.

Functionally, with S4 and S5 plays an important role in translational accuracy. Located at the interface of the 30S and 50S subunits. This is Small ribosomal subunit protein uS12 from Thermoplasma acidophilum (strain ATCC 25905 / DSM 1728 / JCM 9062 / NBRC 15155 / AMRC-C165).